The following is a 365-amino-acid chain: Phosphatidylcholine:ceramide cholinephosphotransferase 2 (365 aa).

Positions 9–50 are disordered; the sequence is LEGHLESQTNDSTNTYTSPTEAVEEEGKNGKGKPKTLSNGLR. Residues 14 to 28 show a composition bias toward polar residues; it reads ESQTNDSTNTYTSPT. Helical transmembrane passes span 80–100, 128–148, 159–179, 219–239, and 248–268; these read GIAF…ITVV, FSVS…QWLF, FFFI…VTTL, ILCG…TYLF, and FWWY…CILV. H229 is a catalytic residue. Catalysis depends on residues H272 and D276. A helical transmembrane segment spans residues 273–290; the sequence is YTVDVIIAYYITTRLFWW. Over 291-365 the chain is Cytoplasmic; sequence YHSMANEKNL…KIGEDNEKST (75 aa). S-palmitoyl cysteine attachment occurs at residues C331, C332, C343, and C348.

The protein belongs to the sphingomyelin synthase family. In terms of processing, palmitoylated on Cys-331, Cys-332, Cys-343 and Cys-348; which plays an important role in plasma membrane localization. As to expression, highest expression is detected in cortical bone, followed by vertebrae, kidney and liver. Expression levels are very low in spleen, muscle, heart, brown fat and thymus. Expressed in macrophages.

Its subcellular location is the cell membrane. The protein resides in the golgi apparatus membrane. The enzyme catalyses an N-acylsphing-4-enine + a 1,2-diacyl-sn-glycero-3-phosphocholine = a sphingomyelin + a 1,2-diacyl-sn-glycerol. It carries out the reaction an N-acylsphinganine + a 1,2-diacyl-sn-glycero-3-phosphocholine = an N-acylsphinganine-1-phosphocholine + a 1,2-diacyl-sn-glycerol. It catalyses the reaction an N-acyl-(4R)-4-hydroxysphinganine + a 1,2-diacyl-sn-glycero-3-phosphocholine = an N-acyl-(4R)-4-hydroxysphinganine-phosphocholine + a 1,2-diacyl-sn-glycerol. The catalysed reaction is an N-acylsphing-4-enine + a 1,2-diacyl-sn-glycero-3-phosphoethanolamine = an N-acylsphing-4-enine 1-phosphoethanolamine + a 1,2-diacyl-sn-glycerol. The enzyme catalyses an N-acylsphinganine + a 1,2-diacyl-sn-glycero-3-phosphoethanolamine = an N-acylsphinganine-1-phosphoethanolamine + a 1,2-diacyl-sn-glycerol. It carries out the reaction an N-acyl-(4R)-4-hydroxysphinganine + a 1,2-diacyl-sn-glycero-3-phosphoethanolamine = an N-acyl-(4R)-4-hydroxysphinganine-1-phosphoethanolamine + a 1,2-diacyl-sn-glycerol. It catalyses the reaction 1,2-dihexadecanoyl-sn-glycero-3-phosphocholine + an N-acylsphing-4-enine = 1,2-dihexadecanoyl-sn-glycerol + a sphingomyelin. The catalysed reaction is 1-(9Z-octadecenoyl)-2-acyl-sn-3-glycerol + a sphingomyelin = a 1-(9Z-octadecenoyl)-2-acyl-sn-glycero-3-phosphocholine + an N-acylsphing-4-enine. The enzyme catalyses N-hexadecanoylsphinganine + a 1,2-diacyl-sn-glycero-3-phosphocholine = N-hexadecanoyl-sphinganine-1-phosphocholine + a 1,2-diacyl-sn-glycerol. It carries out the reaction N-hexadecanoyl-(4R)-hydroxysphinganine + a 1,2-diacyl-sn-glycero-3-phosphocholine = N-hexadecanoyl-(4R)-hydroxysphinganine-phosphocholine + a 1,2-diacyl-sn-glycerol. It catalyses the reaction N-hexadecanoylsphinganine + a 1,2-diacyl-sn-glycero-3-phosphoethanolamine = N-hexadecanoyl-sphinganine-1-phosphoethanolamine + a 1,2-diacyl-sn-glycerol. The catalysed reaction is N-hexadecanoyl-(4R)-hydroxysphinganine + a 1,2-diacyl-sn-glycero-3-phosphoethanolamine = N-hexadecanoyl-(4R)-hydroxysphinganine-1-phosphoethanolamine + a 1,2-diacyl-sn-glycerol. Its pathway is sphingolipid metabolism. Functionally, sphingomyelin synthase that primarily contributes to sphingomyelin synthesis and homeostasis at the plasma membrane. Catalyzes the reversible transfer of phosphocholine moiety in sphingomyelin biosynthesis: in the forward reaction transfers phosphocholine head group of phosphatidylcholine (PC) on to ceramide (CER) to form ceramide phosphocholine (sphingomyelin, SM) and diacylglycerol (DAG) as by-product, and in the reverse reaction transfers phosphocholine from SM to DAG to form PC and CER. The direction of the reaction appears to depend on the levels of CER and DAG in the plasma membrane. Does not use free phosphorylcholine or CDP-choline as donors. Can also transfer phosphoethanolamine head group of phosphatidylethanolamine (PE) on to ceramide (CER) to form ceramide phosphoethanolamine (CPE). Regulates receptor-mediated signal transduction via mitogenic DAG and proapoptotic CER, as well as via SM, a structural component of membrane rafts that serve as platforms for signal transduction and protein sorting. To a lesser extent, plays a role in secretory transport via regulation of DAG pool at the Golgi apparatus and its downstream effects on PRKD1. Required for normal bone matrix mineralization. The chain is Phosphatidylcholine:ceramide cholinephosphotransferase 2 (Sgms2) from Mus musculus (Mouse).